The sequence spans 121 residues: Neuropeptide-like protein 7 (121 aa).

A signal peptide spans 1 to 22 (MYIKAALLIVVLFGVASQITSA).

Its function is as follows. May regulate lifespan in response to food availability and oxidative stress. The polypeptide is Neuropeptide-like protein 7 (Caenorhabditis elegans).